The primary structure comprises 312 residues: Taste receptor type 2 member 103 (312 aa).

At 1 to 6 (MVLTIR) the chain is on the extracellular side. Residues 7–27 (AILWVTLITIISLEFIIGILG) form a helical membrane-spanning segment. The Cytoplasmic segment spans residues 28–61 (NVFIALVNIIDWVKRGKISAVDKTYMALAISRTA). A helical transmembrane segment spans residues 62–82 (FLLSLITGFLVSLLDPALLGM). The Extracellular segment spans residues 83 to 92 (RTMVRLLTIS). A helical transmembrane segment spans residues 93-113 (WMVTNHFSVWFATCLSIFYFL). Over 114–132 (KIANFSNSIFLVLKWEAKK) the chain is Cytoplasmic. A helical membrane pass occupies residues 133–153 (VVSVTLVVSVIILIMNIIVIN). Over 154 to 185 (KFTDRLQVNTLQNCSTSNTLKDYGLFLFISTG) the chain is Extracellular. Asn-166 is a glycosylation site (N-linked (GlcNAc...) asparagine). Residues 186–206 (FTLTPFAVSLTMFLLLIFSLW) form a helical membrane-spanning segment. At 207-229 (RHLKNMCHSATGSRDVSTVAHIK) the chain is on the cytoplasmic side. The chain crosses the membrane as a helical span at residues 230–250 (GLQTVVTFLLLYTAFVMSLLS). Over 251–264 (ESLNINIQHTNLLS) the chain is Extracellular. The helical transmembrane segment at 265 to 285 (HFLRSIGVAFPTGHSCVLILG) threads the bilayer. Topologically, residues 286 to 312 (NSKLRQASLSVILWLRYKYKHIENWGP) are cytoplasmic.

This sequence belongs to the G-protein coupled receptor T2R family. In terms of tissue distribution, expressed in subsets of taste receptor cells of the tongue and palate epithelium and exclusively in gustducin-positive cells. Expressed in 15% taste bud cells in circumvallate and foliate papillae but only in 2% in fungiform papillae.

Its subcellular location is the membrane. Gustducin-coupled receptor implicated in the perception of bitter compounds in the oral cavity and the gastrointestinal tract. Signals through PLCB2 and the calcium-regulated cation channel TRPM5. The polypeptide is Taste receptor type 2 member 103 (Tas2r103) (Mus musculus (Mouse)).